Reading from the N-terminus, the 671-residue chain is Zinc finger and BTB domain-containing protein 16-A (671 aa).

A BTB domain is found at 34–96 (CDVVIMVDSQ…AYTATLQAKV (63 aa)). Disordered stretches follow at residues 130–167 (ENDT…TEES) and 248–289 (VDES…RSSV). Residues 270–279 (RSGEPDKNRD) are compositionally biased toward basic and acidic residues. The residue at position 283 (T283) is a Phosphothreonine. 9 C2H2-type zinc fingers span residues 401-423 (ERCN…RKLH), 429-451 (YGCE…LLSH), 458-480 (IVCD…RQIH), 487-509 (IFCL…MEVH), 515-537 (YICS…LRSH), 544-566 (FECE…KRIH), 572-594 (YECN…YRVH), 600-622 (FECK…LRTH), and 628-650 (YQCT…MKGH).

This sequence belongs to the krueppel C2H2-type zinc-finger protein family. As to quaternary structure, interacts with btbd6a (via BTB domain). In terms of processing, polyubiquitinated, leading to its proteasomal degradation. During early stages of primary neurogenesis, expressed in the neural epithelium, with highest levels in the forebrain and midbrain. Also expressed in a posterior-to-anterior gradient in the caudal neural plate at the 3-6 somite stage.

The protein localises to the nucleus. Its subcellular location is the cytoplasm. The protein operates within protein modification; protein ubiquitination. Probable transcription factor. Probable substrate-recognition component of an E3 ubiquitin-protein ligase complex which mediates the ubiquitination and subsequent proteasomal degradation of target proteins. Inhibits neurogenesis. The protein is Zinc finger and BTB domain-containing protein 16-A of Danio rerio (Zebrafish).